A 383-amino-acid polypeptide reads, in one-letter code: Paralemmin-1 (383 aa).

The residue at position 1 (M1) is an N-acetylmethionine. Residues 5–102 (ATDTASQQER…KEIDVLEFGE (98 aa)) adopt a coiled-coil conformation. 3 disordered regions span residues 51–163 (RERW…GSTM), 242–295 (TLSE…GQEP), and 334–375 (ATPR…MKKP). A compositionally biased stretch (basic and acidic residues) spans 69 to 96 (DMRKQMQEDEQKARGLEESITRLEKEID). Polar residues-rich tracts occupy residues 109–124 (KENSAAPSPGRPQSAS) and 133–143 (ETLVNAQQTPL). Residues S116, S122, and S124 each carry the phosphoserine modification. 3 positions are modified to phosphothreonine: T141, T145, and T153. Residues S157 and S161 each carry the phosphoserine modification. T242 is modified (phosphothreonine). The residue at position 244 (S244) is a Phosphoserine. Residues 257 to 273 (GLAEDVTRTTPSRREIT) are compositionally biased toward basic and acidic residues. Low complexity predominate over residues 285–295 (GPPGIQPGQEP). At S345 the chain carries Phosphoserine. Polar residues predominate over residues 357-367 (QTGPTTTPSDT). Phosphothreonine occurs at positions 361, 362, and 363. A Phosphoserine modification is found at S365. A Phosphothreonine modification is found at T367. Residues C377 and C379 are each lipidated (S-palmitoyl cysteine). The residue at position 380 (C380) is a Cysteine methyl ester. The S-farnesyl cysteine moiety is linked to residue C380. Residues 381-383 (SVM) constitute a propeptide, removed in mature form.

Belongs to the paralemmin family. As to quaternary structure, interacts with dopamine receptor DRD3. As to expression, expression is highest in brain, intermediate in adrenal gland and kidney, and much lower or undetectable in other tissues. Isoform 1 is the predominant isoform in most tissues except brain and kidney where isoform 2 predominates.

The protein localises to the cell membrane. The protein resides in the cell projection. It is found in the filopodium membrane. Its subcellular location is the axon. It localises to the dendrite. The protein localises to the dendritic spine. The protein resides in the basolateral cell membrane. It is found in the apicolateral cell membrane. Its function is as follows. Involved in plasma membrane dynamics and cell process formation. Isoform 1 and isoform 2 are necessary for axonal and dendritic filopodia induction, for dendritic spine maturation and synapse formation in a palmitoylation-dependent manner. The polypeptide is Paralemmin-1 (Palm) (Mus musculus (Mouse)).